The sequence spans 104 residues: Cell division protein FtsB (104 aa).

The Cytoplasmic portion of the chain corresponds to 1–3; that stretch reads MGK. A helical membrane pass occupies residues 4 to 21; sequence LTLLLLVLLGWLQYSLWL. Topologically, residues 22–104 are periplasmic; the sequence is GKNGIHDYTR…NAQQGRPASQ (83 aa). A coiled-coil region spans residues 33–62; that stretch reads DEDVASQQGNNAKLKARNDRLFAEIDDLNG.

Belongs to the FtsB family. In terms of assembly, part of a complex composed of FtsB, FtsL and FtsQ.

It localises to the cell inner membrane. Functionally, essential cell division protein. May link together the upstream cell division proteins, which are predominantly cytoplasmic, with the downstream cell division proteins, which are predominantly periplasmic. The polypeptide is Cell division protein FtsB (Erwinia tasmaniensis (strain DSM 17950 / CFBP 7177 / CIP 109463 / NCPPB 4357 / Et1/99)).